A 771-amino-acid polypeptide reads, in one-letter code: Ribonucleoside-diphosphate reductase large subunit (771 aa).

The 92-residue stretch at 1 to 92 (MFVIKRNGYK…VSNLHKETKK (92 aa)) folds into the ATP-cone domain. ATP-binding positions include 5–6 (KR), 11–17 (ENVMFDK), threonine 53, aspartate 57, and lysine 88. The GDP site is built by serine 202 and serine 217. Residues 226–228 (DSI), lysine 243, and arginine 256 contribute to the dTTP site. Residue asparagine 427 coordinates GDP. The Proton acceptor role is filled by asparagine 427. Catalysis depends on cysteine 429, which acts as the Cysteine radical intermediate. Residues glutamate 431 and 603 to 606 (TAST) contribute to the GDP site. Residue glutamate 431 is the Proton acceptor of the active site.

It belongs to the ribonucleoside diphosphate reductase large chain family. In terms of assembly, interacts with RNR2/OPG047 subunit. It depends on Mg(2+) as a cofactor.

It catalyses the reaction a 2'-deoxyribonucleoside 5'-diphosphate + [thioredoxin]-disulfide + H2O = a ribonucleoside 5'-diphosphate + [thioredoxin]-dithiol. Its function is as follows. Ribonucleoside-diphosphate reductase holoenzyme provides the precursors necessary for viral DNA synthesis. Allows virus growth in non-dividing cells. Catalyzes the biosynthesis of deoxyribonucleotides from the corresponding ribonucleotides. This Homo sapiens (Human) protein is Ribonucleoside-diphosphate reductase large subunit (OPG080).